A 242-amino-acid chain; its full sequence is Cell division protein FtsQ (242 aa).

Residues 1–12 are Cytoplasmic-facing; that stretch reads MWDNAEAMERLT. A helical transmembrane segment spans residues 13–32; it reads RWLLVMMAMLLAASGLVWFY. The Periplasmic portion of the chain corresponds to 33–242; sequence NSNHLPVKQV…DGLPEKESEE (210 aa). Positions 37–106 constitute a POTRA domain; sequence LPVKQVSLKG…DTVEVVLTER (70 aa).

Belongs to the FtsQ/DivIB family. FtsQ subfamily. As to quaternary structure, part of a complex composed of FtsB, FtsL and FtsQ.

Its subcellular location is the cell inner membrane. Functionally, essential cell division protein. May link together the upstream cell division proteins, which are predominantly cytoplasmic, with the downstream cell division proteins, which are predominantly periplasmic. May control correct divisome assembly. The chain is Cell division protein FtsQ from Neisseria gonorrhoeae (strain ATCC 700825 / FA 1090).